The chain runs to 347 residues: GMP reductase (347 aa).

Position 108 to 131 (A108 to A131) interacts with NADP(+). G181 and G183 together coordinate K(+). The Thioimidate intermediate role is filled by C186. I216–V239 serves as a coordination point for NADP(+).

This sequence belongs to the IMPDH/GMPR family. GuaC type 1 subfamily. Homotetramer.

It catalyses the reaction IMP + NH4(+) + NADP(+) = GMP + NADPH + 2 H(+). Catalyzes the irreversible NADPH-dependent deamination of GMP to IMP. It functions in the conversion of nucleobase, nucleoside and nucleotide derivatives of G to A nucleotides, and in maintaining the intracellular balance of A and G nucleotides. This Salmonella arizonae (strain ATCC BAA-731 / CDC346-86 / RSK2980) protein is GMP reductase.